A 206-amino-acid chain; its full sequence is Peptidyl-tRNA hydrolase (206 aa).

Tyrosine 19 contributes to the tRNA binding site. Histidine 24 (proton acceptor) is an active-site residue. TRNA contacts are provided by tyrosine 70, asparagine 72, and asparagine 118.

The protein belongs to the PTH family. In terms of assembly, monomer.

It is found in the cytoplasm. The catalysed reaction is an N-acyl-L-alpha-aminoacyl-tRNA + H2O = an N-acyl-L-amino acid + a tRNA + H(+). In terms of biological role, hydrolyzes ribosome-free peptidyl-tRNAs (with 1 or more amino acids incorporated), which drop off the ribosome during protein synthesis, or as a result of ribosome stalling. Its function is as follows. Catalyzes the release of premature peptidyl moieties from peptidyl-tRNA molecules trapped in stalled 50S ribosomal subunits, and thus maintains levels of free tRNAs and 50S ribosomes. The polypeptide is Peptidyl-tRNA hydrolase (Prochlorococcus marinus (strain MIT 9303)).